The sequence spans 358 residues: MNTFGKSFRVSTFGESHGEGIGCVIDGIPAGLHIDELFIESMMTRRAPGRNQYTTQRKESDKVQILSGVFEGLSTGTPIGMWIANTGTKSSDYANIKDIFRPGHADYTYFKKYGIRDYRGGGRSSARESVARVAAGAVAQMLLREFDINVQSGICSIGNITGKQYDFAYALKSEIYALDKECEESQKALIENAKRKHDSIGGSALIRVEGLPAGLGEPLYHRLDGALGEALMGLNAVKAVEIGDGIISCTQYGSEHNDQMDKNGFKSNHSGGILGGISNGNALLVKAHFKPTPSIFIPQETLDIHLQEQTCQIKGRHDPCVAVRGSIVAQAMVALVLADMLLLHATSQLCFLKKIYKQ.

R46 is an NADP(+) binding site. Residues 123 to 125, 235 to 236, G275, 290 to 294, and R316 contribute to the FMN site; these read RSS, NA, and KPTPS.

Belongs to the chorismate synthase family. As to quaternary structure, homotetramer. Requires FMNH2 as cofactor.

The catalysed reaction is 5-O-(1-carboxyvinyl)-3-phosphoshikimate = chorismate + phosphate. It functions in the pathway metabolic intermediate biosynthesis; chorismate biosynthesis; chorismate from D-erythrose 4-phosphate and phosphoenolpyruvate: step 7/7. Catalyzes the anti-1,4-elimination of the C-3 phosphate and the C-6 proR hydrogen from 5-enolpyruvylshikimate-3-phosphate (EPSP) to yield chorismate, which is the branch point compound that serves as the starting substrate for the three terminal pathways of aromatic amino acid biosynthesis. This reaction introduces a second double bond into the aromatic ring system. The protein is Chorismate synthase of Helicobacter hepaticus (strain ATCC 51449 / 3B1).